The chain runs to 192 residues: Putative integrase/recombinase y4gC (192 aa).

The Tyr recombinase domain maps to 1–183; it reads MPSILERDQI…ATEDLRAIAL (183 aa). Residues Arg-41, Lys-66, His-135, Arg-138, and His-161 contribute to the active site. The active-site O-(3'-phospho-DNA)-tyrosine intermediate is Tyr-170.

Belongs to the 'phage' integrase family.

In Sinorhizobium fredii (strain NBRC 101917 / NGR234), this protein is Putative integrase/recombinase y4gC.